The sequence spans 394 residues: 3-amino-4-hydroxybenzoate 2-monooxygenase (394 aa).

The FAD site is built by Ala16 and Arg109. Tyr214 acts as the Proton acceptor in catalysis. An FAD-binding site is contributed by Asp287.

This sequence belongs to the 6-hydroxynicotinate 3-monooxygenase family. The cofactor is FAD.

It catalyses the reaction 3-amino-4-hydroxybenzoate + NADPH + O2 + H(+) = 3-amino-2,4-dihydroxybenzoate + NADP(+) + H2O. It participates in antibiotic biosynthesis. Part of a gene cluster involved in the biosynthesis of cremeomycin, a light-sensitive o-diazoquinone with antibacterial and antiproliferative effects. Catalyzes the hydroxylation of 3-amino-4-hydroxybenzoate (3,4-AHBA) to 3-amino-2,4-dihydroxybenzoate (3,2,4-ADHBA). In Streptomyces cremeus, this protein is 3-amino-4-hydroxybenzoate 2-monooxygenase.